We begin with the raw amino-acid sequence, 228 residues long: Dolichyl-phosphate hexose transferase HVO_1613 (228 aa).

The protein belongs to the glycosyltransferase 2 family.

Its function is as follows. Glycosyltransferase that adds a monosaccharide to dolichol phosphate, thereby being responsible for generating one of the three monosaccharide-modified dolichol phosphates. The subunit onto which additional sugars are added is not known. This is Dolichyl-phosphate hexose transferase HVO_1613 from Haloferax volcanii (strain ATCC 29605 / DSM 3757 / JCM 8879 / NBRC 14742 / NCIMB 2012 / VKM B-1768 / DS2) (Halobacterium volcanii).